We begin with the raw amino-acid sequence, 387 residues long: Patatin group A-3 (387 aa).

Residues 1–23 (MATTKSFLILIVMILATTSSTFA) form the signal peptide. One can recognise a PNPLA domain in the interval 32 to 230 (LSIDGGGVKG…TVADPALLSV (199 aa)). The short motif at 36-41 (GGGVKG) is the GXGXXG element. A GXSXG motif is present at residues 75–79 (GTSTG). The active-site Nucleophile is the Ser77. Asn115 carries an N-linked (GlcNAc...) asparagine glycan. Residue Asp216 is the Proton acceptor of the active site. The short motif at 216–218 (DGA) is the DGA/G element. Residues 361 to 385 (ETYEEALKRFAKLLSDRKKLRANKA) are a coiled coil.

This sequence belongs to the patatin family. In terms of tissue distribution, tuber and stolon.

It is found in the vacuole. Probable lipolytic acyl hydrolase (LAH), an activity which is thought to be involved in the response of tubers to pathogens. The polypeptide is Patatin group A-3 (Solanum tuberosum (Potato)).